A 382-amino-acid chain; its full sequence is D-alanine--D-alanine ligase (382 aa).

The ATP-grasp domain maps to 139-348 (KRLMRDAGLP…PPALMDALIA (210 aa)). 168–223 (EALESRTLFVKPANMGSSVGVSRVADAGQFDQALAHAFAYDEKILIERAVPRAREI) provides a ligand contact to ATP. 3 residues coordinate Mg(2+): Asp-300, Glu-315, and Asn-317.

Belongs to the D-alanine--D-alanine ligase family. Mg(2+) is required as a cofactor. The cofactor is Mn(2+).

The protein resides in the cytoplasm. It catalyses the reaction 2 D-alanine + ATP = D-alanyl-D-alanine + ADP + phosphate + H(+). The protein operates within cell wall biogenesis; peptidoglycan biosynthesis. In terms of biological role, cell wall formation. This Methylobacterium sp. (strain 4-46) protein is D-alanine--D-alanine ligase.